A 1330-amino-acid chain; its full sequence is G2/mitotic-specific cyclin-B3 (1330 aa).

Positions 1–50 (MPLPLPSRSSKPETKKSRSSKIVPSGNNGQSEKRGENYQEKISSSSPRRL) are disordered. Polar residues predominate over residues 20–30 (SKIVPSGNNGQ). Residues 54–62 (RSAFEDLTN) carry the D-box motif. Residues 1002-1059 (VETSSRVPSTPPESRAGMSSVGKLSTTSKSSVCESSSNKPSSSWGESSQKEMTPLEDI) form a disordered region. Over residues 1026–1048 (STTSKSSVCESSSNKPSSSWGES) the composition is skewed to low complexity.

This sequence belongs to the cyclin family. Cyclin AB subfamily. In terms of assembly, interacts with CDK2 kinase. Post-translationally, ubiquitinated. Ubiquitination leads to its degradation during anaphase entry, after degradation of CCNB1.

The protein localises to the nucleus. In terms of biological role, cyclins are positive regulatory subunits of the cyclin-dependent kinases (CDKs), and thereby play an essential role in the control of the cell cycle, notably via their destruction during cell division. Its tissue specificity suggest that it may be required during early meiotic prophase I. The protein is G2/mitotic-specific cyclin-B3 (CCNB3) of Canis lupus familiaris (Dog).